Consider the following 98-residue polypeptide: Integration host factor subunit alpha (98 aa).

Residues 49–70 are disordered; the sequence is FGNFDLRDKNQRPGRNPKTGED.

This sequence belongs to the bacterial histone-like protein family. Heterodimer of an alpha and a beta chain.

Its function is as follows. This protein is one of the two subunits of integration host factor, a specific DNA-binding protein that functions in genetic recombination as well as in transcriptional and translational control. The polypeptide is Integration host factor subunit alpha (Shewanella baltica (strain OS223)).